A 65-amino-acid chain; its full sequence is Large ribosomal subunit protein uL29 (65 aa).

It belongs to the universal ribosomal protein uL29 family.

The sequence is that of Large ribosomal subunit protein uL29 from Buchnera aphidicola subsp. Acyrthosiphon pisum (strain 5A).